The following is a 173-amino-acid chain: Thiol-disulfide oxidoreductase ResA (173 aa).

The helical; Signal-anchor for type II membrane protein transmembrane segment at 10-29 (VIILLILCGAVGFTLYQGFF) threads the bilayer. A Thioredoxin domain is found at 35–173 (MQIGKEAPNF…LEGYLQKITP (139 aa)). Cysteines 73 and 76 form a disulfide.

Belongs to the thioredoxin family. ResA subfamily.

It localises to the cell membrane. The protein operates within protein modification; cytochrome c assembly. Functionally, thiol-disulfide oxidoreductase which is required in disulfide reduction during c-type cytochrome synthesis. May accept reducing equivalents from CcdA, leading to breakage of disulfide bonds in apocytochrome c; following this reduction heme can be covalently attached. In Bacillus cereus (strain ZK / E33L), this protein is Thiol-disulfide oxidoreductase ResA.